The following is a 90-amino-acid chain: Probable small nuclear ribonucleoprotein F (90 aa).

In terms of domain architecture, Sm spans 7-80 (NPRPFLQDLV…VLYIKKADEA (74 aa)).

The protein belongs to the snRNP Sm proteins family. SmF/LSm6 subfamily.

It localises to the nucleus. Its subcellular location is the cytoplasm. Its function is as follows. Plays a role in pre-mRNA splicing as a core component of the spliceosomal U1, U2, U4 and U5 small nuclear ribonucleoproteins (snRNPs), the building blocks of the spliceosome. The chain is Probable small nuclear ribonucleoprotein F from Neurospora crassa (strain ATCC 24698 / 74-OR23-1A / CBS 708.71 / DSM 1257 / FGSC 987).